A 386-amino-acid polypeptide reads, in one-letter code: MNIHEYQAKEILSKYNVPIQPGIAILKYEDIDYAIDSLATDTFVIKAQIHAGGRKIGGGIKISNDKNEAKNLAKNMWGMNLVTPQTGPKGQKVQRIYIESAAKIKLELYLGAVIDRSNHCITFMASSAGGINIEEVAHTNPDKIIKVKINILTGIQPFHSRKIIFQLGLTGDLAKQMAKIMSAVYSMLINTDATQVEINPLIITLDDKLIALDAKINFDDSALFRQPLIQGMRDEDEEDHLELRATKADLSYVRMNGNIGCMVNGAGLAMATMDIIKLYGAEPANFLDVGGSADKKRVAEALKIISSDQNVKGILINIFGGIMRCDIIAEGVLAAAKEINLSIPLVVRLAGTNFELGKEILSNSKLQIVAANDLDDAARKIVEAVS.

Residues lysine 46, glutamate 99, alanine 102, and glutamate 107 each contribute to the ATP site. Mg(2+) contacts are provided by asparagine 199 and aspartate 213. Substrate-binding positions include asparagine 264 and 321–323 (GIM).

It belongs to the succinate/malate CoA ligase beta subunit family. Heterotetramer of two alpha and two beta subunits. It depends on Mg(2+) as a cofactor.

The enzyme catalyses succinate + ATP + CoA = succinyl-CoA + ADP + phosphate. It carries out the reaction GTP + succinate + CoA = succinyl-CoA + GDP + phosphate. It functions in the pathway carbohydrate metabolism; tricarboxylic acid cycle; succinate from succinyl-CoA (ligase route): step 1/1. Functionally, succinyl-CoA synthetase functions in the citric acid cycle (TCA), coupling the hydrolysis of succinyl-CoA to the synthesis of either ATP or GTP and thus represents the only step of substrate-level phosphorylation in the TCA. The beta subunit provides nucleotide specificity of the enzyme and binds the substrate succinate, while the binding sites for coenzyme A and phosphate are found in the alpha subunit. This chain is Succinate--CoA ligase [ADP-forming] subunit beta, found in Orientia tsutsugamushi (strain Boryong) (Rickettsia tsutsugamushi).